A 399-amino-acid chain; its full sequence is tRNA-specific 2-thiouridylase MnmA (399 aa).

ATP is bound by residues 7–14 (AMSGGVDS) and methionine 33. Cysteine 128 (nucleophile) is an active-site residue. Cysteine 128 and cysteine 224 are disulfide-bonded. Glycine 152 serves as a coordination point for ATP. The tract at residues 174–176 (KDQ) is interaction with tRNA. Cysteine 224 (cysteine persulfide intermediate) is an active-site residue. The interval 333–334 (RY) is interaction with tRNA.

It belongs to the MnmA/TRMU family.

It is found in the cytoplasm. It carries out the reaction S-sulfanyl-L-cysteinyl-[protein] + uridine(34) in tRNA + AH2 + ATP = 2-thiouridine(34) in tRNA + L-cysteinyl-[protein] + A + AMP + diphosphate + H(+). In terms of biological role, catalyzes the 2-thiolation of uridine at the wobble position (U34) of tRNA, leading to the formation of s(2)U34. In Rhodopirellula baltica (strain DSM 10527 / NCIMB 13988 / SH1), this protein is tRNA-specific 2-thiouridylase MnmA.